The following is a 502-amino-acid chain: UPF0371 protein CLD_0424 (502 aa).

Belongs to the UPF0371 family.

The chain is UPF0371 protein CLD_0424 from Clostridium botulinum (strain Okra / Type B1).